The primary structure comprises 436 residues: Methyl-accepting chemotaxis protein Amb0994 (436 aa).

Residues 1–8 lie on the Cytoplasmic side of the membrane; that stretch reads METTLGSY. Residues 9–29 traverse the membrane as a helical segment; sequence ARTLSLGMLVPSAICLLAGTF. A topological domain (periplasmic) is located at residue Gly30. A helical membrane pass occupies residues 31 to 51; the sequence is LLGGSSIALWVVIAVSLLGVV. Over 52-436 the chain is Cytoplasmic; it reads GGVKIGGSAR…DGFIARIGGR (385 aa). Residues 180–416 form the Methyl-accepting transducer domain; sequence AATELEASSG…QVADAASELS (237 aa). Gln211 carries the glutamate methyl ester (Gln) modification. A Glutamate methyl ester (Glu) modification is found at Glu225. The segment at 321–436 is required for interaction with MamK and to respond to the magnetic field; it reads TEDITSQVAH…DGFIARIGGR (116 aa).

It belongs to the methyl-accepting chemotaxis (MCP) protein family. In terms of assembly, interacts with MamK at cell poles and septa.

The protein localises to the cell inner membrane. In terms of biological role, probable methyl-accepting taxis protein. May be the receptor that senses the torque generated from the interaction between the magnetosome dipole moment and the external magnetic field. Overproduction interferes with magnetotaxis, cells respond more slowly to changes in the magnetic field; requires the MamK-interacting C-terminus of the protein. The effect of magnetic sensing is to control flagellar rotation. Chemotactic-signal transducers respond to changes in the concentration of attractants and repellents in the environment, transduce a signal from the outside to the inside of the cell, and facilitate sensory adaptation through variation of methylation levels. Attractants increase the level of methylation while repellents decrease the level of methylation. This Paramagnetospirillum magneticum (strain ATCC 700264 / AMB-1) (Magnetospirillum magneticum) protein is Methyl-accepting chemotaxis protein Amb0994.